We begin with the raw amino-acid sequence, 515 residues long: 2-isopropylmalate synthase (515 aa).

In terms of domain architecture, Pyruvate carboxyltransferase spans 4-266 (IKFFDTTLRD…ETRLNLQEIK (263 aa)). Residues D13, H201, H203, and N237 each coordinate Mn(2+). The tract at residues 391–515 (QLSSIQVQYG…RAENEKVATS (125 aa)) is regulatory domain.

The protein belongs to the alpha-IPM synthase/homocitrate synthase family. LeuA type 1 subfamily. As to quaternary structure, homodimer. Requires Mn(2+) as cofactor.

The protein resides in the cytoplasm. The enzyme catalyses 3-methyl-2-oxobutanoate + acetyl-CoA + H2O = (2S)-2-isopropylmalate + CoA + H(+). It participates in amino-acid biosynthesis; L-leucine biosynthesis; L-leucine from 3-methyl-2-oxobutanoate: step 1/4. In terms of biological role, catalyzes the condensation of the acetyl group of acetyl-CoA with 3-methyl-2-oxobutanoate (2-ketoisovalerate) to form 3-carboxy-3-hydroxy-4-methylpentanoate (2-isopropylmalate). The sequence is that of 2-isopropylmalate synthase from Geobacillus stearothermophilus (Bacillus stearothermophilus).